A 557-amino-acid polypeptide reads, in one-letter code: Dihydroxy-acid dehydratase (557 aa).

Cys-50 provides a ligand contact to [2Fe-2S] cluster. Asp-82 provides a ligand contact to Mg(2+). Cys-123 contacts [2Fe-2S] cluster. Asp-124 and Lys-125 together coordinate Mg(2+). Lys-125 is modified (N6-carboxylysine). Cys-195 contacts [2Fe-2S] cluster. Glu-447 contributes to the Mg(2+) binding site. Ser-473 serves as the catalytic Proton acceptor.

This sequence belongs to the IlvD/Edd family. In terms of assembly, homodimer. [2Fe-2S] cluster is required as a cofactor. It depends on Mg(2+) as a cofactor.

It carries out the reaction (2R)-2,3-dihydroxy-3-methylbutanoate = 3-methyl-2-oxobutanoate + H2O. The catalysed reaction is (2R,3R)-2,3-dihydroxy-3-methylpentanoate = (S)-3-methyl-2-oxopentanoate + H2O. Its pathway is amino-acid biosynthesis; L-isoleucine biosynthesis; L-isoleucine from 2-oxobutanoate: step 3/4. The protein operates within amino-acid biosynthesis; L-valine biosynthesis; L-valine from pyruvate: step 3/4. In terms of biological role, functions in the biosynthesis of branched-chain amino acids. Catalyzes the dehydration of (2R,3R)-2,3-dihydroxy-3-methylpentanoate (2,3-dihydroxy-3-methylvalerate) into 2-oxo-3-methylpentanoate (2-oxo-3-methylvalerate) and of (2R)-2,3-dihydroxy-3-methylbutanoate (2,3-dihydroxyisovalerate) into 2-oxo-3-methylbutanoate (2-oxoisovalerate), the penultimate precursor to L-isoleucine and L-valine, respectively. The sequence is that of Dihydroxy-acid dehydratase from Herminiimonas arsenicoxydans.